The sequence spans 151 residues: MQEGQNRKTSSLSILAIAGVEPYQEKPGEEYMNEAQLAHFRRILEAWRNQLRDEVDRTVTHMQDEAANFPDPVDRAAQEEEFSLELRNRDRERKLIKKIEKTLKKVEDEDFGYCESCGVEIGIRRLEARPTADLCIDCKTLAEIREKQMAG.

A coiled-coil region spans residues 33-54 (NEAQLAHFRRILEAWRNQLRDE). Residues Cys-114, Cys-117, Cys-135, and Cys-138 each contribute to the Zn(2+) site. The dksA C4-type zinc finger occupies 114–138 (CESCGVEIGIRRLEARPTADLCIDC).

This sequence belongs to the DksA family. As to quaternary structure, interacts directly with the RNA polymerase.

The protein resides in the cytoplasm. Transcription factor that acts by binding directly to the RNA polymerase (RNAP). Required for negative regulation of rRNA expression and positive regulation of several amino acid biosynthesis promoters. Also required for regulation of fis expression. The protein is RNA polymerase-binding transcription factor DksA of Escherichia coli O157:H7.